A 500-amino-acid polypeptide reads, in one-letter code: Glycerol kinase (500 aa).

Threonine 14 is a binding site for ADP. Residues threonine 14, threonine 15, and serine 16 each coordinate ATP. Threonine 14 is a sn-glycerol 3-phosphate binding site. Arginine 18 provides a ligand contact to ADP. Sn-glycerol 3-phosphate is bound by residues arginine 84, glutamate 85, and tyrosine 136. Residues arginine 84, glutamate 85, and tyrosine 136 each coordinate glycerol. Phosphohistidine; by HPr is present on histidine 232. Aspartate 246 serves as a coordination point for sn-glycerol 3-phosphate. Aspartate 246 and glutamine 247 together coordinate glycerol. 2 residues coordinate ADP: threonine 268 and glycine 311. Positions 268, 311, 315, and 412 each coordinate ATP. ADP is bound by residues glycine 412 and asparagine 416.

The protein belongs to the FGGY kinase family. Homotetramer and homodimer (in equilibrium). The phosphoenolpyruvate-dependent sugar phosphotransferase system (PTS), including enzyme I, and histidine-containing protein (HPr) are required for the phosphorylation, which leads to the activation of the enzyme.

It catalyses the reaction glycerol + ATP = sn-glycerol 3-phosphate + ADP + H(+). It functions in the pathway polyol metabolism; glycerol degradation via glycerol kinase pathway; sn-glycerol 3-phosphate from glycerol: step 1/1. With respect to regulation, activated by phosphorylation and inhibited by fructose 1,6-bisphosphate (FBP). Its function is as follows. Key enzyme in the regulation of glycerol uptake and metabolism. Catalyzes the phosphorylation of glycerol to yield sn-glycerol 3-phosphate. The chain is Glycerol kinase from Limosilactobacillus reuteri (strain DSM 20016) (Lactobacillus reuteri).